The sequence spans 278 residues: tRNA pseudouridine synthase A (278 aa).

The active-site Nucleophile is Asp61. Residue Tyr119 coordinates substrate.

The protein belongs to the tRNA pseudouridine synthase TruA family. As to quaternary structure, homodimer.

The enzyme catalyses uridine(38/39/40) in tRNA = pseudouridine(38/39/40) in tRNA. Its function is as follows. Formation of pseudouridine at positions 38, 39 and 40 in the anticodon stem and loop of transfer RNAs. The sequence is that of tRNA pseudouridine synthase A from Oleidesulfovibrio alaskensis (strain ATCC BAA-1058 / DSM 17464 / G20) (Desulfovibrio alaskensis).